Here is a 319-residue protein sequence, read N- to C-terminus: tRNA uridine(34) hydroxylase (319 aa).

The region spanning 127 to 221 (KQEDTVIIDA…YGKDPEVQGE (95 aa)) is the Rhodanese domain. C181 (cysteine persulfide intermediate) is an active-site residue.

It belongs to the TrhO family.

It catalyses the reaction uridine(34) in tRNA + AH2 + O2 = 5-hydroxyuridine(34) in tRNA + A + H2O. Functionally, catalyzes oxygen-dependent 5-hydroxyuridine (ho5U) modification at position 34 in tRNAs. This is tRNA uridine(34) hydroxylase from Bacillus cereus (strain G9842).